A 175-amino-acid chain; its full sequence is MSTIAKDQTQINDKIRAKELRLIGQDGEQIGVKSKREALKMAERVDLDLVVVAPNAKPPVARIMDYGKFKFEQQKKEKEMKKKQKIINVKEIRLSPTIEEHDFQTKLKNGRKFLTKGDKCKVSIRFRGRAITHKEIGQRVLEKYADECKDIATVEQKPKMDGRQMFIMLAPTAEK.

This sequence belongs to the IF-3 family. In terms of assembly, monomer.

It is found in the cytoplasm. In terms of biological role, IF-3 binds to the 30S ribosomal subunit and shifts the equilibrium between 70S ribosomes and their 50S and 30S subunits in favor of the free subunits, thus enhancing the availability of 30S subunits on which protein synthesis initiation begins. This is Translation initiation factor IF-3 from Staphylococcus aureus (strain NCTC 8325 / PS 47).